We begin with the raw amino-acid sequence, 245 residues long: Complement C1q subcomponent subunit A (245 aa).

Residues 1–22 (METSQGWLVACVLAVTLVWTVA) form the signal peptide. A Collagen-like domain is found at 31 to 109 (GKDGVAGIPG…KGVKGNPGNI (79 aa)). Residues 35–111 (VAGIPGRPGR…VKGNPGNIRD (77 aa)) are disordered. A 4-hydroxyproline mark is found at P39 and P45. Residue K48 is modified to 5-hydroxylysine. K48 carries an O-linked (Gal...) hydroxylysine glycan. P54 bears the 4-hydroxyproline mark. A 5-hydroxylysine modification is found at K67. K67 carries O-linked (Gal...) hydroxylysine glycosylation. 4-hydroxyproline occurs at positions 79 and 85. A 5-hydroxylysine modification is found at K100. Residue K100 is glycosylated (O-linked (Gal...) hydroxylysine). The region spanning 110-245 (RDQPRPAFSA…FSGFLIFPSA (136 aa)) is the C1q domain. N-linked (GlcNAc...) asparagine glycosylation occurs at N146. A disulfide bond links C172 and C190. Residue Q199 participates in Ca(2+) binding.

As to quaternary structure, core component of the complement C1 complex, a calcium-dependent complex composed of 1 molecule of the C1Q subcomplex, 2 molecules of C1R and 2 molecules of C1S. The C1Q subcomplex is composed 18 subunits: 3 chains of C1QA, C1QB, and C1QC trimerize to form 6 collagen-like triple helices connected to six globular ligand-recognition modules (C1q domain). Interacts with CR1 (via Sushi 24 and Sushi 25 domains). Interacts (via C-terminus) with CD33; this interaction activates CD33 inhibitory motifs. Post-translationally, O-linked glycans are assumed to be the Glc-Gal disaccharides typically found as secondary modifications of hydroxylated lysines in collagen-like domains.

Its subcellular location is the secreted. The protein resides in the cell surface. The C1Q subcomplex is inhibited by sulfated molecules, such as triterpenoid sulfates, heparan sulfate, or chondroitin sulfates. Its function is as follows. Core component of the complement C1 complex, a multiprotein complex that initiates the classical pathway of the complement system, a cascade of proteins that leads to phagocytosis and breakdown of pathogens and signaling that strengthens the adaptive immune system. The classical complement pathway is initiated by the C1Q subcomplex of the C1 complex, which specifically binds IgG or IgM immunoglobulins complexed with antigens, forming antigen-antibody complexes on the surface of pathogens: C1QA, together with C1QB and C1QC, specifically recognizes and binds the Fc regions of IgG or IgM via its C1q domain. Immunoglobulin-binding activates the proenzyme C1R, which cleaves C1S, initiating the proteolytic cascade of the complement system. The C1Q subcomplex is activated by a hexamer of IgG complexed with antigens, while it is activated by a pentameric IgM. The C1Q subcomplex also recognizes and binds phosphatidylserine exposed on the surface of cells undergoing programmed cell death, possibly promoting activation of the complement system. This is Complement C1q subcomponent subunit A from Rattus norvegicus (Rat).